Here is a 140-residue protein sequence, read N- to C-terminus: ATP synthase epsilon chain (140 aa).

This sequence belongs to the ATPase epsilon chain family. In terms of assembly, F-type ATPases have 2 components, CF(1) - the catalytic core - and CF(0) - the membrane proton channel. CF(1) has five subunits: alpha(3), beta(3), gamma(1), delta(1), epsilon(1). CF(0) has three main subunits: a, b and c.

The protein localises to the cell inner membrane. Functionally, produces ATP from ADP in the presence of a proton gradient across the membrane. The protein is ATP synthase epsilon chain of Nitrosomonas eutropha (strain DSM 101675 / C91 / Nm57).